We begin with the raw amino-acid sequence, 514 residues long: Maturase K (514 aa).

This sequence belongs to the intron maturase 2 family. MatK subfamily.

The protein resides in the plastid. Its subcellular location is the chloroplast. Its function is as follows. Usually encoded in the trnK tRNA gene intron. Probably assists in splicing its own and other chloroplast group II introns. The polypeptide is Maturase K (Encephalartos altensteinii (Altenstein's bread tree)).